We begin with the raw amino-acid sequence, 869 residues long: Probable inorganic carbon transporter subunit DabA (869 aa).

The interval 1–32 (MSTATLEQRAKRGEAPRANDAGHCAHPADGAR) is disordered. A compositionally biased stretch (basic and acidic residues) spans 8–17 (QRAKRGEAPR). Zn(2+)-binding residues include C376, D378, H555, and C570.

The protein belongs to the inorganic carbon transporter (TC 9.A.2) DabA family. In terms of assembly, forms a complex with DabB. It depends on Zn(2+) as a cofactor.

The protein localises to the cell inner membrane. Its function is as follows. Part of an energy-coupled inorganic carbon pump. The polypeptide is Probable inorganic carbon transporter subunit DabA (Burkholderia multivorans (strain ATCC 17616 / 249)).